The following is a 171-amino-acid chain: uncharacterized protein (171 aa).

The HTH gntR-type domain maps to 30–97; that stretch reads AGRVSAAYHA…PKKGIIICAL (68 aa). The segment at residues 57-76 is a DNA-binding region (H-T-H motif); it reads EIEIARQLGMSRTPVHEAMA.

This is an uncharacterized protein from Agrobacterium vitis (Rhizobium vitis).